The chain runs to 500 residues: Cytochrome P450 2D27 (500 aa).

Cys446 contacts heme.

The protein belongs to the cytochrome P450 family. The cofactor is heme. Expressed in liver, but not in kidney, small intestine, and brain.

It is found in the endoplasmic reticulum membrane. Its subcellular location is the microsome membrane. Its function is as follows. Has bufuralol 1'-hydroxylase and debrisoquine 4-hydroxylase activities. This Mesocricetus auratus (Golden hamster) protein is Cytochrome P450 2D27 (CYP2D27).